The primary structure comprises 197 residues: Adrenodoxin-like protein 1, mitochondrial (197 aa).

Residues 1 to 35 (MIGHRISRLGSTIVKQLAREGYLATYGTKNLHRSY) constitute a mitochondrion transit peptide. Positions 79–184 (EKITIIFVDK…GVRLAIPSAT (106 aa)) constitute a 2Fe-2S ferredoxin-type domain. 4 residues coordinate [2Fe-2S] cluster: C118, C124, C127, and C165.

It belongs to the adrenodoxin/putidaredoxin family. [2Fe-2S] cluster is required as a cofactor.

Its subcellular location is the mitochondrion matrix. Its function is as follows. Associates in vitro with the adrenodoxin reductase MFDR to form an efficient low potential electron transfer chain that is able to reduce cytochrome C. Functions as accessory mitochondrial protein involved with BIO2 in the plant biotin synthase reaction. The polypeptide is Adrenodoxin-like protein 1, mitochondrial (Arabidopsis thaliana (Mouse-ear cress)).